Reading from the N-terminus, the 595-residue chain is Elongation factor 4 (595 aa).

In terms of domain architecture, tr-type G spans 2 to 184 (KNIRNFSIIA…QIVERIPTPK (183 aa)). GTP contacts are provided by residues 14 to 19 (DHGKST) and 131 to 134 (NKID).

It belongs to the TRAFAC class translation factor GTPase superfamily. Classic translation factor GTPase family. LepA subfamily.

The protein resides in the cell inner membrane. The catalysed reaction is GTP + H2O = GDP + phosphate + H(+). Functionally, required for accurate and efficient protein synthesis under certain stress conditions. May act as a fidelity factor of the translation reaction, by catalyzing a one-codon backward translocation of tRNAs on improperly translocated ribosomes. Back-translocation proceeds from a post-translocation (POST) complex to a pre-translocation (PRE) complex, thus giving elongation factor G a second chance to translocate the tRNAs correctly. Binds to ribosomes in a GTP-dependent manner. This Vesicomyosocius okutanii subsp. Calyptogena okutanii (strain HA) protein is Elongation factor 4.